The chain runs to 671 residues: DNA ligase (671 aa).

NAD(+)-binding positions include 32-36 (DAEYD), 81-82 (SL), and Glu113. Catalysis depends on Lys115, which acts as the N6-AMP-lysine intermediate. The NAD(+) site is built by Arg136, Glu173, Lys290, and Lys314. Zn(2+) contacts are provided by Cys408, Cys411, Cys426, and Cys432. In terms of domain architecture, BRCT spans 593-671 (EIDSPFAGKT…EAEMLRLLGS (79 aa)).

This sequence belongs to the NAD-dependent DNA ligase family. LigA subfamily. The cofactor is Mg(2+). Requires Mn(2+) as cofactor.

The catalysed reaction is NAD(+) + (deoxyribonucleotide)n-3'-hydroxyl + 5'-phospho-(deoxyribonucleotide)m = (deoxyribonucleotide)n+m + AMP + beta-nicotinamide D-nucleotide.. DNA ligase that catalyzes the formation of phosphodiester linkages between 5'-phosphoryl and 3'-hydroxyl groups in double-stranded DNA using NAD as a coenzyme and as the energy source for the reaction. It is essential for DNA replication and repair of damaged DNA. The polypeptide is DNA ligase (Shigella boydii serotype 4 (strain Sb227)).